The primary structure comprises 215 residues: Probable transaldolase (215 aa).

Lys83 acts as the Schiff-base intermediate with substrate in catalysis.

It belongs to the transaldolase family. Type 3B subfamily.

It localises to the cytoplasm. It catalyses the reaction D-sedoheptulose 7-phosphate + D-glyceraldehyde 3-phosphate = D-erythrose 4-phosphate + beta-D-fructose 6-phosphate. It participates in carbohydrate degradation; pentose phosphate pathway; D-glyceraldehyde 3-phosphate and beta-D-fructose 6-phosphate from D-ribose 5-phosphate and D-xylulose 5-phosphate (non-oxidative stage): step 2/3. Its function is as follows. Transaldolase is important for the balance of metabolites in the pentose-phosphate pathway. The chain is Probable transaldolase from Moorella thermoacetica (strain ATCC 39073 / JCM 9320).